The primary structure comprises 120 residues: NAD(P)H-quinone oxidoreductase subunit 3 (120 aa).

Transmembrane regions (helical) follow at residues 1 to 21 (MFVLSGYEYLLGFLIICSLVP), 64 to 84 (MFALVFVVFDVETVFLYPWAV), and 89 to 109 (LGLLAFIEALIFIAILVVALV).

This sequence belongs to the complex I subunit 3 family. NDH-1 can be composed of about 15 different subunits; different subcomplexes with different compositions have been identified which probably have different functions.

It localises to the cellular thylakoid membrane. It catalyses the reaction a plastoquinone + NADH + (n+1) H(+)(in) = a plastoquinol + NAD(+) + n H(+)(out). The enzyme catalyses a plastoquinone + NADPH + (n+1) H(+)(in) = a plastoquinol + NADP(+) + n H(+)(out). NDH-1 shuttles electrons from an unknown electron donor, via FMN and iron-sulfur (Fe-S) centers, to quinones in the respiratory and/or the photosynthetic chain. The immediate electron acceptor for the enzyme in this species is believed to be plastoquinone. Couples the redox reaction to proton translocation, and thus conserves the redox energy in a proton gradient. Cyanobacterial NDH-1 also plays a role in inorganic carbon-concentration. This Trichormus variabilis (strain ATCC 29413 / PCC 7937) (Anabaena variabilis) protein is NAD(P)H-quinone oxidoreductase subunit 3.